Consider the following 346-residue polypeptide: Endo-1,4-beta-xylanase B (346 aa).

The N-terminal stretch at 1-19 is a signal peptide; the sequence is MKGLPALLLLLIGCVSSFG. The region spanning 41 to 338 is the GH10 domain; sequence GNNFWSLPDA…KPCYFAIREL (298 aa). E153 serves as the catalytic Proton donor. The Nucleophile role is filled by E259.

The protein belongs to the glycosyl hydrolase 10 (cellulase F) family.

The enzyme catalyses Endohydrolysis of (1-&gt;4)-beta-D-xylosidic linkages in xylans.. This is Endo-1,4-beta-xylanase B (xynB) from Thermotoga neapolitana.